We begin with the raw amino-acid sequence, 75 residues long: Scuwaprin-a (75 aa).

The N-terminal stretch at 1 to 24 (MSSGGLLLLLGLLTLWAELTPVSG) is a signal peptide. In terms of domain architecture, WAP spans 27-72 (RPKKPGLCPPRPQKPPCVKECKNDWSCPGQQKCCSYGCIDECRDPI). Cystine bridges form between Cys34-Cys60, Cys43-Cys64, Cys47-Cys59, and Cys53-Cys68.

This sequence belongs to the venom waprin family. As to expression, expressed by the venom gland.

The protein resides in the secreted. Its function is as follows. Damages membranes of susceptible bacteria. Has no hemolytic activity. Not toxic to mice. Does not inhibit the proteinases elastase and cathepsin G. This Oxyuranus scutellatus scutellatus (Australian taipan) protein is Scuwaprin-a.